A 730-amino-acid polypeptide reads, in one-letter code: Catalase-peroxidase (730 aa).

The segment covering 1 to 11 (MDAKTDDKDAG) has biased composition (basic and acidic residues). A signal peptide spans 1–21 (MDAKTDDKDAGKCPFSSGSHA). Residues 1-24 (MDAKTDDKDAGKCPFSSGSHAHRN) form a disordered region. The segment at residues 96–218 (WHSAGTYRIS…LGAVQMGLIY (123 aa)) is a cross-link (tryptophyl-tyrosyl-methioninium (Trp-Tyr) (with M-244)). The active-site Proton acceptor is the histidine 97. Residues 218–244 (YVNPEGPNGNPDPVGSAKDIRETFYRM) constitute a cross-link (tryptophyl-tyrosyl-methioninium (Tyr-Met) (with W-96)). Histidine 259 contacts heme b.

This sequence belongs to the peroxidase family. Peroxidase/catalase subfamily. Homodimer or homotetramer. Requires heme b as cofactor. In terms of processing, formation of the three residue Trp-Tyr-Met cross-link is important for the catalase, but not the peroxidase activity of the enzyme.

The catalysed reaction is H2O2 + AH2 = A + 2 H2O. It catalyses the reaction 2 H2O2 = O2 + 2 H2O. Bifunctional enzyme with both catalase and broad-spectrum peroxidase activity. The chain is Catalase-peroxidase from Rhodopseudomonas palustris (strain BisA53).